A 522-amino-acid polypeptide reads, in one-letter code: Peptide methionine sulfoxide reductase MsrA/MsrB (522 aa).

In terms of domain architecture, Thioredoxin spans 17 to 174 (LALGACSPKI…ALALIRDPNA (158 aa)). Cys-68 and Cys-71 are joined by a disulfide. Positions 199-354 (RTIYLAGGCF…PNGYCHIDIR (156 aa)) are peptide methionine sulfoxide reductase A. Cys-207 is a catalytic residue. A MsrB domain is found at 383–506 (DAELKRTLTE…NGASLKFIPL (124 aa)). A disulfide bond links Cys-440 and Cys-495. Cys-495 functions as the Nucleophile in the catalytic mechanism.

In the N-terminal section; belongs to the thioredoxin family. It in the central section; belongs to the MsrA Met sulfoxide reductase family. The protein in the C-terminal section; belongs to the MsrB Met sulfoxide reductase family.

It carries out the reaction L-methionyl-[protein] + [thioredoxin]-disulfide + H2O = L-methionyl-(S)-S-oxide-[protein] + [thioredoxin]-dithiol. The enzyme catalyses [thioredoxin]-disulfide + L-methionine + H2O = L-methionine (S)-S-oxide + [thioredoxin]-dithiol. The catalysed reaction is L-methionyl-[protein] + [thioredoxin]-disulfide + H2O = L-methionyl-(R)-S-oxide-[protein] + [thioredoxin]-dithiol. Its function is as follows. Has an important function as a repair enzyme for proteins that have been inactivated by oxidation. Catalyzes the reversible oxidation-reduction of methionine sulfoxide in proteins to methionine. This Neisseria meningitidis serogroup A / serotype 4A (strain DSM 15465 / Z2491) protein is Peptide methionine sulfoxide reductase MsrA/MsrB (msrAB).